Here is a 271-residue protein sequence, read N- to C-terminus: uncharacterized protein (271 aa).

The protein belongs to the anhydro-N-acetylmuramic acid kinase family.

This is an uncharacterized protein from Yersinia enterocolitica.